We begin with the raw amino-acid sequence, 406 residues long: O-glycosyltransferase PaGT (406 aa).

The segment at Met1–Asp26 is disordered.

Belongs to the afumC glycosyltransferase family.

It participates in mycotoxin biosynthesis. Functionally, O-glycosyltransferase; part of the 2 gene clusters that mediate the biosynthesis of fusicoccins, diterpene glucosides that display phytohormone-like activity and function as potent activators of plasma membrane H(+)-ATPases in plants by modifying 14-3-3 proteins and cause the plant disease constriction canker. The first step in the pathway is performed by the fusicoccadiene synthase PaFS that possesses both prenyl transferase and terpene cyclase activity, converting isopentenyl diphosphate and dimethylallyl diphosphate into geranylgeranyl diphosphate (GGDP) and successively converting GGDP into fusicocca-2,10(14)-diene, a precursor for fusicoccin H. The second step is the oxidation at the C-8 position by the cytochrome P450 monooxygenase PaP450-2 to yield fusicocca-2,10(14)-diene-8-beta-ol. The cytochrome P450 monooxygenase PaP450-1 then catalyzes the hydroxylation at the C-16 position to produce fusicocca-2,10(14)-diene-8-beta,16-diol. The dioxygenase fc-dox then catalyzes the 16-oxydation of fusicocca-2,10(14)-diene-8-beta,16-diol to yield an aldehyde (8-beta-hydroxyfusicocca-1,10(14)-dien-16-al). The short-chain dehydrogenase/reductase fc-sdr catalyzes the reduction of the aldehyde to yield fusicocca-1,10(14)-diene-8-beta,16-diol. The next step is the hydroxylation at C-9 performed by the cytochrome P450 monooxygenase PaP450-3 that leads to fusicoccin H aglycon which is glycosylated to fusicoccin H by the O-glycosyltransferase PaGT. Hydroxylation at C-12 by the cytochrome P450 monooxygenase PaP450-4 leads then to the production of fusicoccin Q and is followed by methylation by the O-methyltransferase PaMT to yield fusicoccin P. Fusicoccin P is further converted to fusicoccin J via prenylation by the O-glucose prenyltransferase PaPT. Cytochrome P450 monooxygenase PaP450-5 then performs hydroxylation at C-19 to yield dideacetyl-fusicoccin A which is acetylated to 3'-O-deacetyl-fusicoccin A by the O-acetyltransferase PaAT-2. Finally, a another acetylation by the O-acetyltransferase PaAT-1 yields fusicoccin A. This is O-glycosyltransferase PaGT from Phomopsis amygdali (Fusicoccum amygdali).